We begin with the raw amino-acid sequence, 505 residues long: AMP phosphorylase (505 aa).

Residues Gly169, Ser195–Gly200, and Thr204 contribute to the AMP site. Catalysis depends on Asp257, which acts as the Proton donor. Residues Ser265 and Lys289 each contribute to the AMP site.

Belongs to the thymidine/pyrimidine-nucleoside phosphorylase family. Type 2 subfamily.

It catalyses the reaction AMP + phosphate = alpha-D-ribose 1,5-bisphosphate + adenine. It carries out the reaction CMP + phosphate = cytosine + alpha-D-ribose 1,5-bisphosphate. The catalysed reaction is UMP + phosphate = alpha-D-ribose 1,5-bisphosphate + uracil. Its function is as follows. Catalyzes the conversion of AMP and phosphate to adenine and ribose 1,5-bisphosphate (R15P). Exhibits phosphorylase activity toward CMP and UMP in addition to AMP. Functions in an archaeal AMP degradation pathway, together with R15P isomerase and RubisCO. The polypeptide is AMP phosphorylase (Methanocorpusculum labreanum (strain ATCC 43576 / DSM 4855 / Z)).